We begin with the raw amino-acid sequence, 273 residues long: Undecaprenyl-diphosphatase (273 aa).

7 consecutive transmembrane segments (helical) span residues alanine 45–tryptophan 65, leucine 90–histidine 110, leucine 116–alanine 136, tyrosine 154–serine 173, tyrosine 190–leucine 210, alanine 222–isoleucine 242, and isoleucine 252–phenylalanine 272.

It belongs to the UppP family.

The protein localises to the cell inner membrane. The enzyme catalyses di-trans,octa-cis-undecaprenyl diphosphate + H2O = di-trans,octa-cis-undecaprenyl phosphate + phosphate + H(+). Catalyzes the dephosphorylation of undecaprenyl diphosphate (UPP). Confers resistance to bacitracin. This chain is Undecaprenyl-diphosphatase, found in Enterobacter sp. (strain 638).